We begin with the raw amino-acid sequence, 207 residues long: Alpha-1-acid glycoprotein 8 (207 aa).

Positions 1–18 (MALHTVLIMLSLLPMLEA) are cleaved as a signal peptide. Residues N25, N34, N76, N94, and N104 are each glycosylated (N-linked (GlcNAc...) asparagine). The cysteines at positions 91 and 184 are disulfide-linked.

The protein belongs to the calycin superfamily. Lipocalin family. In terms of tissue distribution, expressed by the liver and secreted in plasma.

It is found in the secreted. Its function is as follows. Functions as a transport protein in the blood stream. Binds various ligands in the interior of its beta-barrel domain. Appears to function in modulating the activity of the immune system during the acute-phase reaction. This chain is Alpha-1-acid glycoprotein 8 (Orm8), found in Mus caroli (Ryukyu mouse).